Reading from the N-terminus, the 529-residue chain is Glycylpeptide N-tetradecanoyltransferase (529 aa).

The segment covering 1 to 10 (MSEQEGNQSE) has biased composition (polar residues). The segment at 1-65 (MSEQEGNQSE…ANPATKLTPS (65 aa)) is disordered. A compositionally biased stretch (basic and acidic residues) spans 11–23 (HQSEHVGESEGKL). The span at 26 to 40 (ETPTTSQSTNASTGT) shows a compositional bias: polar residues. Residues 118 to 121 (FKFW), 252 to 254 (LCV), and 260 to 264 (SKRLT) each bind tetradecanoyl-CoA. Valine 529 functions as the Proton acceptor; via carboxylate in the catalytic mechanism.

This sequence belongs to the NMT family. In terms of assembly, monomer.

It localises to the cytoplasm. The catalysed reaction is N-terminal glycyl-[protein] + tetradecanoyl-CoA = N-tetradecanoylglycyl-[protein] + CoA + H(+). Functionally, adds a myristoyl group to the N-terminal glycine residue of certain cellular proteins. The protein is Glycylpeptide N-tetradecanoyltransferase of Ajellomyces capsulatus (Darling's disease fungus).